The sequence spans 122 residues: Large ribosomal subunit protein uL14c (122 aa).

This sequence belongs to the universal ribosomal protein uL14 family. As to quaternary structure, part of the 50S ribosomal subunit.

It localises to the plastid. Its subcellular location is the chloroplast. Binds to 23S rRNA. This chain is Large ribosomal subunit protein uL14c, found in Illicium oligandrum (Star anise).